A 113-amino-acid chain; its full sequence is Probable leucocin-A immunity protein (113 aa).

It belongs to the immunity protein EntA family.

Functionally, imparts immunity to leucocin-A to naturally sensitive host strains. This is Probable leucocin-A immunity protein from Leuconostoc gelidum.